The chain runs to 507 residues: MAEEQARHVKNGLECIRALKAEPIGSLAIGEAMAAWSEISDNPGQERATYKEEKAGGSGLSKPCLSAIGSTEGGAPRIRGQGSGESDDDTETLGIPSRNLQASSTGLQCHYVYDHSGEAVKGIQDADSIMVQSGLDGDSTLSEGDNESENSDVDIGEPDTEGYAITDRGSAPISMGFRASDVETAEGGEIHELLRLQSRGNNFPKLGKTLNVPPPPDPGRASTSETPIKKGTDARLASFGTEIASLLTGGATQCARKSPSEPSGPGAPAGNVPECVSNAALIQEWTPESGTTISPRSQNNKEGGDHYDDELFSDIQDIKTALAKIHEDNQKIISKLESLLLLKGEVESIKKQINKQNISISTLEGHLSSIMIAIPGLGKDPNDPTADVEINPDLKPIIGRDSGRALAEVLKKPVASRQLQGMTNGRTSSRGQLLKEFQLKPIGKKMSSAVGFVPDTGPVSRSVIRSIIKSSRIEEDRKRYLMTLLDDIKGANDLSKFHQMLMKIIMK.

Residues 1–48 (MAEEQARHVKNGLECIRALKAEPIGSLAIGEAMAAWSEISDNPGQERA) form an interaction with N0 region. Disordered stretches follow at residues 42–91 (NPGQ…DDTE), 133–163 (SGLD…TEGY), 201–227 (NNFP…SETP), 252–273 (TQCA…GNVP), and 285–307 (WTPE…GDHY). Phosphoserine is present on residues Ser86 and Ser151. Over residues 144-160 (GDNESENSDVDIGEPDT) the composition is skewed to acidic residues. A compositionally biased stretch (low complexity) spans 260 to 270 (SEPSGPGAPAG). Positions 286 to 301 (TPESGTTISPRSQNNK) are enriched in polar residues. Residues 304–376 (GDHYDDELFS…LSSIMIAIPG (73 aa)) are multimerization. Interaction with the L polymerase regions lie at residues 361–377 (STLE…IPGL) and 396–410 (PIIG…AEVL). Residues 457 to 507 (GPVSRSVIRSIIKSSRIEEDRKRYLMTLLDDIKGANDLSKFHQMLMKIIMK) form a x domain (XD) region. The tract at residues 459-507 (VSRSVIRSIIKSSRIEEDRKRYLMTLLDDIKGANDLSKFHQMLMKIIMK) is interaction with the nucleocapsid (N-RNA).

This sequence belongs to the morbillivirus P protein family. Homotetramer. Interacts (via multimerization domain and XD domain) with polymerase L; this interaction forms the polymerase L-P complex. Interacts (via N-terminus) with N0 (via Ncore); this interaction allows P to chaperon N0 to avoid N polymerization and non-specific RNA binding before encapsidation. Interacts (via C-terminus) with N-RNA template (via Ntail); this interaction maintains the P/L complex anchored to the nucleocapsid template during the sequential transcription. Interacts (via C-terminus) with protein C this interaction allows C to associate with the ribonucleocapsid. Phosphorylation on serines by host CK2 is necessary for the formation of viral factories.

Its function is as follows. Essential cofactor of the RNA polymerase L that plays a central role in the transcription and replication by forming the polymerase complex with RNA polymerase L and recruiting L to the genomic N-RNA template for RNA synthesis. Also plays a central role in the encapsidation of nascent RNA chains by forming the encapsidation complex with the nucleocapsid protein N (N-P complex). Acts as a chaperone for newly synthesized free N protein, so-called N0, allowing encapsidation of nascent RNA chains during replication. The nucleoprotein protein N prevents excessive phosphorylation of P, which leads to down-regulation of viral transcription/ replication. Participates, together with N, in the formation of viral factories (viroplasms), which are large inclusions in the host cytoplasm where replication takes place. The protein is Phosphoprotein (P/V) of Homo sapiens (Human).